The sequence spans 470 residues: Aminoacyl transferase sphA (470 aa).

Pyridoxal 5'-phosphate is bound by residues Ser-212, His-244, and Thr-272. At Lys-275 the chain carries N6-(pyridoxal phosphate)lysine.

Belongs to the class-II pyridoxal-phosphate-dependent aminotransferase family. BioF subfamily. In terms of assembly, homodimer. The cofactor is pyridoxal 5'-phosphate.

The protein operates within secondary metabolite biosynthesis. Aminoacyl transferase; part of the gene cluster that mediates the biosynthesis of sphingofungins, bioactive molecules acting as sphingolipid inhibitors via inhibiting serine palmitoyl transferase (SPT). Within the pathway, sphA transfers 2-methyl-aminomalonate and 2-hydroxymethyl-aminomalonate onto the sphB product 3-hydroxyoctadeca-4,10-dienoyl-ACP to produce the precursors of sphingofungins E and F. The substrate specificity of sphA using 2-methyl-aminomalonate and 2-hydroxymethyl-aminomalonate instread of aminomalonate is responsible for the biosynthesis of sphingofungins E and F but not B and C like in Aspergillus fumigatus. The PKS sphB does not contain any putative thioesterase domain for releasing the nascent polyketide chain and it has been suggested that aminoacyl transferases can facilitate the polyketide chain release. The protein is Aminoacyl transferase sphA of Byssochlamys spectabilis (Paecilomyces variotii).